A 178-amino-acid chain; its full sequence is Large ribosomal subunit protein eL20y (178 aa).

This sequence belongs to the eukaryotic ribosomal protein eL20 family.

The protein is Large ribosomal subunit protein eL20y (RPL18AB) of Arabidopsis thaliana (Mouse-ear cress).